The following is a 355-amino-acid chain: MAIDDNKQKALAAALGQIEKQFGKGSIMRLGEDRTMDVETISTGSLSLDIALGAGGLPMGRIVEIYGPESSGKTTLTLQVIAAAQRKGKTCAFIDAEHALDPVYAKKLGVDIDNLLCSQPDTGEQALEICDALARSGAVDVIIVDSVAALTPKAEIEGEIGDSHMGLAARMMSQAMRKLAGNLKNSGTLLIFINQIRMKIGVMFGNPETTTGGNALKFYASVRLDIRRIGAIKEGDEVVGSETRVKVVKNKVAAPFKQAEFQIMYGEGINIFGELVDLGVKHKLIEKAGAWYSYNGDKIGQGKANAGNFLKENSAIANEIDAKLREMLLGNQDDKPDFTPAAHEVDEGSEAKENF.

Residue 67-74 (GPESSGKT) coordinates ATP. Residues 331–355 (NQDDKPDFTPAAHEVDEGSEAKENF) form a disordered region.

Belongs to the RecA family.

It is found in the cytoplasm. Its function is as follows. Can catalyze the hydrolysis of ATP in the presence of single-stranded DNA, the ATP-dependent uptake of single-stranded DNA by duplex DNA, and the ATP-dependent hybridization of homologous single-stranded DNAs. It interacts with LexA causing its activation and leading to its autocatalytic cleavage. This is Protein RecA from Erwinia tasmaniensis (strain DSM 17950 / CFBP 7177 / CIP 109463 / NCPPB 4357 / Et1/99).